The sequence spans 361 residues: Probable cinnamyl alcohol dehydrogenase (361 aa).

Cys-48 provides a ligand contact to Zn(2+). Thr-50 lines the NADP(+) pocket. His-70, Glu-71, Cys-101, Cys-104, Cys-107, Cys-115, and Cys-164 together coordinate Zn(2+). NADP(+) contacts are provided by residues Thr-168, 189–194 (GLGGVG), 212–217 (SSSDKK), Thr-252, Gly-276, and 299–301 (SFI).

Belongs to the zinc-containing alcohol dehydrogenase family. As to quaternary structure, homodimer. Zn(2+) serves as cofactor.

It carries out the reaction (E)-cinnamyl alcohol + NADP(+) = (E)-cinnamaldehyde + NADPH + H(+). The enzyme catalyses (E)-coniferol + NADP(+) = (E)-coniferaldehyde + NADPH + H(+). It catalyses the reaction (E)-sinapyl alcohol + NADP(+) = (E)-sinapaldehyde + NADPH + H(+). The catalysed reaction is (E)-4-coumaroyl alcohol + NADP(+) = (E)-4-coumaraldehyde + NADPH + H(+). It carries out the reaction (E)-caffeyl alcohol + NADP(+) = (E)-caffeyl aldehyde + NADPH + H(+). It functions in the pathway aromatic compound metabolism; phenylpropanoid biosynthesis. Functionally, involved in lignin biosynthesis. Catalyzes the final step specific for the production of lignin monomers. Catalyzes the NADPH-dependent reduction of coniferaldehyde, 5-hydroxyconiferaldehyde, sinapaldehyde, 4-coumaraldehyde and caffeyl aldehyde to their respective alcohols. The protein is Probable cinnamyl alcohol dehydrogenase of Lolium perenne (Perennial ryegrass).